The sequence spans 148 residues: 3-dehydroquinate dehydratase (148 aa).

Catalysis depends on Y23, which acts as the Proton acceptor. Residues N75, H81, and D88 each contribute to the substrate site. H101 (proton donor) is an active-site residue. Substrate is bound by residues 102–103 and R112; that span reads MS.

The protein belongs to the type-II 3-dehydroquinase family. Homododecamer.

The enzyme catalyses 3-dehydroquinate = 3-dehydroshikimate + H2O. The protein operates within metabolic intermediate biosynthesis; chorismate biosynthesis; chorismate from D-erythrose 4-phosphate and phosphoenolpyruvate: step 3/7. Its function is as follows. Catalyzes a trans-dehydration via an enolate intermediate. The protein is 3-dehydroquinate dehydratase of Syntrophotalea carbinolica (strain DSM 2380 / NBRC 103641 / GraBd1) (Pelobacter carbinolicus).